Here is a 332-residue protein sequence, read N- to C-terminus: Heterogeneous nuclear ribonucleoprotein A/B (332 aa).

A disordered region spans residues 1–66; it reads MSEAGEEQPM…DQINASKNEE (66 aa). Positions 29-49 are enriched in low complexity; that stretch reads GRGWTGAAAGAGGATAAPPSG. RRM domains follow at residues 69–154 and 153–233; these read GKMF…PVKK and KKIF…QPKE. The residue at position 81 (Ser-81) is a Phosphoserine. Glycyl lysine isopeptide (Lys-Gly) (interchain with G-Cter in SUMO2) cross-links involve residues Lys-130 and Lys-203. The residue at position 215 (Lys-215) is an N6-acetyllysine. A disordered region spans residues 235 to 268; sequence YQQQQYGSGGRGNRNRGNRGSGGGGGGGGQSQSW. The residue at position 242 (Ser-242) is a Phosphoserine. Position 245 is a dimethylated arginine; alternate (Arg-245). Arg-245 is subject to Omega-N-methylarginine; alternate. An omega-N-methylarginine mark is found at Arg-250, Gly-251, Arg-253, and Gly-254. The segment covering 253-264 has biased composition (gly residues); sequence RGSGGGGGGGGQ. Phosphoserine occurs at positions 255 and 256. 3 positions are modified to N6-acetyllysine: Gly-271, Tyr-272, and Lys-318. The disordered stretch occupies residues 311 to 332; it reads QGSTNYGKSQRRGGHQNNYKPY. Residue Arg-322 is modified to Dimethylated arginine; alternate. Residue Arg-322 is modified to Omega-N-methylarginine; alternate. An Asymmetric dimethylarginine; alternate modification is found at Arg-322.

As to quaternary structure, identified in a IGF2BP1-dependent mRNP granule complex containing untranslated mRNAs. Interacts with APOBEC1. In terms of processing, dimethylation at Arg-322 is probably asymmetric. Ubiquitous.

The protein resides in the nucleus. Its subcellular location is the cytoplasm. Binds single-stranded RNA. Has a high affinity for G-rich and U-rich regions of hnRNA. Also binds to APOB mRNA transcripts around the RNA editing site. The chain is Heterogeneous nuclear ribonucleoprotein A/B (HNRNPAB) from Homo sapiens (Human).